The following is a 661-amino-acid chain: Phospholipid:diacylglycerol acyltransferase (661 aa).

Residues 1–71 (MGTLFRRNVQ…FDRKRDGNGR (71 aa)) are disordered. Residues 1–80 (MGTLFRRNVQ…RKRWRDSRRL (80 aa)) lie on the Cytoplasmic side of the membrane. Basic residues predominate over residues 34-48 (HIHHQQGLGHKRRRG). 2 consecutive short sequence motifs (bipartite nuclear localization signal) follow at residues 43-50 (HKRRRGIS) and 64-71 (RKRDGNGR). A compositionally biased stretch (basic and acidic residues) spans 54-70 (KRNERGKDFDRKRDGNG). Residues 81–101 (IFILGAFLGVLLPFSFGAYHV) traverse the membrane as a helical segment. Topologically, residues 102–661 (HNSDSDLFDN…QWVSQMPFPM (560 aa)) are lumenal. Gln-162 provides a ligand contact to substrate. Residues 322-326 (GHSMG) carry the GHSXG lipase motif motif. Ser-324 (acyl-ester intermediate) is an active-site residue. Met-325 is a substrate binding site. N-linked (GlcNAc...) asparagine glycans are attached at residues Asn-453, Asn-461, and Asn-469. The active-site Charge relay system is the Asp-567. N-linked (GlcNAc...) asparagine glycosylation is present at Asn-594. His-618 functions as the Charge relay system in the catalytic mechanism.

Belongs to the AB hydrolase superfamily. Lipase family.

It is found in the endoplasmic reticulum membrane. The protein localises to the nucleus inner membrane. The catalysed reaction is a glycerophospholipid + a 1,2-diacyl-sn-glycerol = a monoacylglycerophospholipid + a triacyl-sn-glycerol. It carries out the reaction a 1-acyl-sn-glycerol + a 1,2-diacyl-sn-glycero-3-phosphocholine = a 1-acyl-sn-glycero-3-phosphocholine + a 1,2-diacyl-sn-glycerol. The enzyme catalyses 1,2-di-(9Z-octadecenoyl)-sn-glycero-3-phosphoethanolamine + 1,2-di-(9Z-octadecenoyl)-sn-glycerol = 1-(9Z-octadecenoyl)-sn-glycero-3-phosphoethanolamine + 1,2,3-tri-(9Z-octadecenoyl)-glycerol. It catalyses the reaction 1,2-di-(9Z-octadecenoyl)-sn-glycerol + 1,2-di-(9Z-octadecenoyl)-sn-glycero-3-phosphocholine = 1,2,3-tri-(9Z-octadecenoyl)-glycerol + 1-(9Z-octadecenoyl)-sn-glycero-3-phosphocholine. The catalysed reaction is 1-(9Z-octadecenoyl)-sn-glycerol + 1,2-di-(9Z-octadecenoyl)-sn-glycero-3-phosphocholine = di-(9Z)-octadecenoylglycerol + 1-(9Z-octadecenoyl)-sn-glycero-3-phosphocholine. It carries out the reaction 2-(9Z-octadecenoyl)-glycerol + 1,2-di-(9Z-octadecenoyl)-sn-glycero-3-phosphocholine = 1,2-di-(9Z-octadecenoyl)-glycerol + 1-(9Z-octadecenoyl)-sn-glycero-3-phosphocholine. The enzyme catalyses 1-(9Z-octadecenoyl)-2-hexadecanoyl-sn-glycero-3-phosphoethanolamine + 1,2-di-(9Z-octadecenoyl)-sn-glycerol = 1,2-di-(9Z)-octadecenoyl-3-hexadecanoyl-sn-glycerol + 1-(9Z-octadecenoyl)-sn-glycero-3-phosphoethanolamine. It catalyses the reaction 1-(9Z-octadecenoyl)-2-octadecanoyl-sn-glycero-3-phosphoethanolamine + 1,2-di-(9Z-octadecenoyl)-sn-glycerol = 1,2-di-(9Z)-octadecenoyl-3-octadecanoyl-sn-glycerol + 1-(9Z-octadecenoyl)-sn-glycero-3-phosphoethanolamine. The catalysed reaction is 1-(9Z)-octadecenoyl-2-(9Z,12Z)-octadecadienoyl-sn-glycero-3-phosphoethanolamine + 1,2-di-(9Z-octadecenoyl)-sn-glycerol = 1,2-di-(9Z)-octadecenoyl-3-(9Z,12Z)-octadecadienoyl-sn-glycerol + 1-(9Z-octadecenoyl)-sn-glycero-3-phosphoethanolamine. Functionally, catalyzes triacylglycerol (TAG) formation by an acyl-CoA independent pathway. The enzyme specifically transfers acyl groups from the sn-2 position of a phospholipid to diacylglycerol (DAG), thus forming an sn-1-lysophospholipid. The preferred acyl donors are phosphatidylethanolamine (PE) and phosphatidylcholine (PC). Also capable of using broad acyl donors such as phosphatidic acid (PA), phosphatidylserine (PS), phosphatidylglycerol (PG) and phosphatidylinositol (PI), as well as monogalactosyldiacylglycerol (MGDG), digalactosyldiacylglycerol (DGDG), and acyl-CoA, and it is more likely to use unsaturated acyl donors. As acyl acceptors, it prefers 1,2- over 1,3-diacylglycerol (DAG). Additionally, has esterification activity that can utilize methanol as acyl acceptor to generate fatty acid methyl esters (FAME). Can also utilize ceramide instead of DAG, acylating the ceramides by attaching a fatty acid to the hydroxy group on the first carbon atom of the long-chain base to produce 1-O-acylceramides. Involved in lipid particle synthesis from the endoplasmic reticulum, promoting localized TAG production at discrete ER subdomains. Relocates from the endoplasmic reticulum to a subdomain of the inner nuclear membrane upon nutrient starvation, where it provides a site of TAG synthesis, which is coupled with nuclear membrane remodeling. The chain is Phospholipid:diacylglycerol acyltransferase from Saccharomyces cerevisiae (strain ATCC 204508 / S288c) (Baker's yeast).